Consider the following 888-residue polypeptide: 3-hydroxy-3-methylglutaryl-coenzyme A reductase (888 aa).

The Cytoplasmic portion of the chain corresponds to 1–9 (MLSRLFRMH). Residues 10–39 (GLFVASHPWEVIVGTVTLTICMMSMNMFTG) form a helical membrane-spanning segment. Residues 40 to 56 (NNKICGWNYECPKFEED) lie on the Lumenal side of the membrane. A helical transmembrane segment spans residues 57 to 78 (VLSSDIIILTITRCIAILYIYF). In terms of domain architecture, SSD spans 61 to 218 (DIIILTITRC…MTFFPACVSL (158 aa)). The short motif at 75 to 78 (YIYF) is the INSIG-binding motif element. Residues 79–89 (QFQNLRQLGSK) are Cytoplasmic-facing. K89 participates in a covalent cross-link: Glycyl lysine isopeptide (Lys-Gly) (interchain with G-Cter in ubiquitin). Residues 90–114 (YILGIAGLFTIFSSFVFSTVVIHFL) traverse the membrane as a helical segment. The Lumenal segment spans residues 115-123 (DKELTGLNE). Residues 124 to 149 (ALPFFLLLIDLSRASTLAKFALSSNS) traverse the membrane as a helical segment. At 150–159 (QDEVRENIAR) the chain is on the cytoplasmic side. The helical transmembrane segment at 160–187 (GMAILGPTFTLDALVECLVIGVGTMSGV) threads the bilayer. The Lumenal segment spans residues 188–191 (RQLE). Residues 192–220 (IMCCFGCMSVLANYFVFMTFFPACVSLVL) form a helical membrane-spanning segment. Topologically, residues 221–248 (ELSRESREGRPIWLLSHFARVLEEEENK) are cytoplasmic. K248 is covalently cross-linked (Glycyl lysine isopeptide (Lys-Gly) (interchain with G-Cter in ubiquitin)). Residues 249-275 (PNPVTQRVKMIMSLGLVLVHAHSRWIA) form a helical membrane-spanning segment. Residues 276 to 314 (DPSPQNSTADTSKVSLGLDENVSKRIEPSVSLWQFYLSK) lie on the Lumenal side of the membrane. N-linked (GlcNAc...) asparagine glycosylation is found at N281 and N296. The chain crosses the membrane as a helical span at residues 315–339 (MISMDIEQVITLSLALLLAVKYIFF). The Cytoplasmic portion of the chain corresponds to 340–888 (EQTETESTLS…LQGACTKKTA (549 aa)). Catalysis depends on charge relay system residues E559, K691, and D767. The Proton donor role is filled by H866. At S872 the chain carries Phosphoserine; by AMPK.

The protein belongs to the HMG-CoA reductase family. In terms of assembly, homotetramer. Homodimer. Interacts (via its SSD) with INSIG1; the interaction, accelerated by sterols, leads to the recruitment of HMGCR to AMFR/gp78 for its ubiquitination by the sterol-mediated ERAD pathway. Interacts with UBIAD1. Post-translationally, undergoes sterol-mediated ubiquitination and ER-associated degradation (ERAD). Accumulation of sterols in the endoplasmic reticulum (ER) membrane, triggers binding of the reductase to the ER membrane protein INSIG1 or INSIG2. The INSIG1 binding leads to the recruitment of the ubiquitin ligase, AMFR/gp78, RNF139 or RNF145, initiating ubiquitination of the reductase. The ubiquitinated reductase is then extracted from the ER membrane and delivered to cytosolic 26S proteosomes by a mechanism probably mediated by the ATPase Valosin-containing protein VCP/p97. The INSIG2-binding leads to the recruitment of the ubiquitin ligase RNF139, initiating ubiquitination of the reductase. Lys-248 is the main site of ubiquitination. Ubiquitination is enhanced by the presence of a geranylgeranylated protein. In terms of processing, N-glycosylated. Deglycosylated by NGLY1 on release from the endoplasmic reticulum (ER) in a sterol-mediated manner. Phosphorylated. Phosphorylation at Ser-872 reduces the catalytic activity.

Its subcellular location is the endoplasmic reticulum membrane. The protein localises to the peroxisome membrane. It catalyses the reaction (R)-mevalonate + 2 NADP(+) + CoA = (3S)-3-hydroxy-3-methylglutaryl-CoA + 2 NADPH + 2 H(+). It functions in the pathway metabolic intermediate biosynthesis; (R)-mevalonate biosynthesis; (R)-mevalonate from acetyl-CoA: step 3/3. Regulated by a negative feedback mechanism through sterols and non-sterol metabolites derived from mevalonate. Phosphorylation at Ser-872 down-regulates the catalytic activity. Catalyzes the conversion of (3S)-hydroxy-3-methylglutaryl-CoA (HMG-CoA) to mevalonic acid, the rate-limiting step in the synthesis of cholesterol and other isoprenoids, thus plays a critical role in cellular cholesterol homeostasis. This chain is 3-hydroxy-3-methylglutaryl-coenzyme A reductase (HMGCR), found in Pongo abelii (Sumatran orangutan).